The sequence spans 653 residues: Testicular spindle-associated protein SHCBP1L (653 aa).

Positions 1–65 (MASGSKASVP…PVKGKAGRET (65 aa)) are disordered. The residue at position 8 (serine 8) is a Phosphoserine. Over residues 28–41 (SAVSGDTAAATTLK) the composition is skewed to polar residues. Positions 46 to 56 (PVRSVVASPRP) are enriched in low complexity. Serine 53 is modified (phosphoserine). Positions 299–326 (IAQRFKKTLEKYKNKRVELIEYQSNIKE) form a coiled coil. 4 PbH1 repeats span residues 493–514 (SGHM…CVLT), 515–537 (GAAL…ELYP), 538–571 (GSIA…NMKV), and 574–596 (APKL…SILQ). Lysine 570 is modified (N6-acetyllysine). Lysine 645 bears the N6-acetyllysine mark.

In terms of assembly, interacts with HSPA2; this interaction may promote the recruitment of HSPA2 to the spindle. Expressed in spermatocytes and elongating spermatids inside the seminiferous tubules (at protein level). Testis-specific.

It localises to the cytoplasm. The protein resides in the cytoskeleton. Its subcellular location is the spindle. In terms of biological role, testis-specific spindle-associated factor that plays a role in spermatogenesis. In association with HSPA2, participates in the maintenance of spindle integrity during meiosis in male germ cells. The polypeptide is Testicular spindle-associated protein SHCBP1L (Homo sapiens (Human)).